The sequence spans 100 residues: Nucleoid-associated protein Cagg_3200 (100 aa).

Belongs to the YbaB/EbfC family. Homodimer.

Its subcellular location is the cytoplasm. The protein localises to the nucleoid. Functionally, binds to DNA and alters its conformation. May be involved in regulation of gene expression, nucleoid organization and DNA protection. The protein is Nucleoid-associated protein Cagg_3200 of Chloroflexus aggregans (strain MD-66 / DSM 9485).